The primary structure comprises 71 residues: UPF0346 protein SPP_0954 (71 aa).

It belongs to the UPF0346 family.

This is UPF0346 protein SPP_0954 from Streptococcus pneumoniae (strain P1031).